The primary structure comprises 103 residues: Small ribosomal subunit protein uS10 (103 aa).

It belongs to the universal ribosomal protein uS10 family. In terms of assembly, part of the 30S ribosomal subunit.

Its function is as follows. Involved in the binding of tRNA to the ribosomes. This chain is Small ribosomal subunit protein uS10, found in Neisseria gonorrhoeae.